The sequence spans 289 residues: MSEAFDCAKCNESLYGRKYIQTDSGPYCVPCYDNTFANTCAECQQLIGHDSRELFYEDRHFHEGCFRCCRCQRSLADEPFTCQDSELLCNECYCTAFSSQCSACGETVMPGSRKLEYGGQTWHEHCFLCSGCEQPLGSRSFVPDKGAHYCVPCYENKFAPRCARCSKTLTQGGVTYRDQPWHRECLVCTGCKTPLAGQQFTSRDDDPYCVACFGELFAPKCSSCKRPITGGSGGGEGAGLGGGKYVSFEDRHWHHSCFSCARCSTSLVGQGFVPDGDQVLCQGCSQAGP.

N-acetylserine is present on serine 2. The C4-type zinc-finger motif lies at 7 to 31; that stretch reads CAKCNESLYGRKYIQTDSGPYCVPC. LIM zinc-binding domains are found at residues 40–92 and 101–153; these read CAEC…CNEC and CSAC…CVPC. The residue at position 157 (lysine 157) is an N6-acetyllysine. 2 consecutive LIM zinc-binding domains span residues 162–212 and 221–275; these read CARC…CVAC and CSSC…FVPD. Lysine 244 carries the N6-acetyllysine modification.

As to quaternary structure, interacts with SOX15; the interaction recruits FHL3 to FOXK1 promoters where it acts as a transcriptional coactivator of FOXK1. In terms of tissue distribution, expressed in myogenic progenitor cells (at protein level). Expressed in skeletal striated muscle and the heart. Expressed to a lesser extent, in lung, and kidney. Expressed in skin and skeletal muscles such as the masseter, tongue, tibialis anterior and plantar muscles.

It is found in the nucleus. Its subcellular location is the cytoplasm. Functionally, recruited by SOX15 to FOXK1 promoters where it acts as a transcriptional coactivator of FOXK1. The polypeptide is Four and a half LIM domains protein 3 (Fhl3) (Mus musculus (Mouse)).